Consider the following 425-residue polypeptide: Proline--tRNA ligase (425 aa).

Belongs to the class-II aminoacyl-tRNA synthetase family. ProS type 2 subfamily. In terms of assembly, homodimer.

The protein resides in the cytoplasm. The catalysed reaction is tRNA(Pro) + L-proline + ATP = L-prolyl-tRNA(Pro) + AMP + diphosphate. In terms of biological role, catalyzes the attachment of proline to tRNA(Pro) in a two-step reaction: proline is first activated by ATP to form Pro-AMP and then transferred to the acceptor end of tRNA(Pro). This chain is Proline--tRNA ligase, found in Wolbachia sp. subsp. Brugia malayi (strain TRS).